We begin with the raw amino-acid sequence, 142 residues long: Galectin-16 (142 aa).

Positions 6–138 (VPYKLPVSLS…DVSLDSVLVN (133 aa)) constitute a Galectin domain.

In terms of tissue distribution, predominantly and highly expressed in the placenta where it is localized mainly in the syncytiotrophoblast and in the endothelia of fetal vessels. Also detected in the amnion and chorionic trophoblasts in fetal membranes.

Binds lactose with high affinity. Strong inducer of T-cell apoptosis. This Homo sapiens (Human) protein is Galectin-16.